We begin with the raw amino-acid sequence, 314 residues long: 4-hydroxy-3-methylbut-2-enyl diphosphate reductase (314 aa).

Cysteine 12 is a [4Fe-4S] cluster binding site. Positions 41 and 74 each coordinate (2E)-4-hydroxy-3-methylbut-2-enyl diphosphate. Dimethylallyl diphosphate is bound by residues histidine 41 and histidine 74. Positions 41 and 74 each coordinate isopentenyl diphosphate. Cysteine 96 contacts [4Fe-4S] cluster. Histidine 124 is a binding site for (2E)-4-hydroxy-3-methylbut-2-enyl diphosphate. Histidine 124 lines the dimethylallyl diphosphate pocket. Histidine 124 serves as a coordination point for isopentenyl diphosphate. Glutamate 126 serves as the catalytic Proton donor. Threonine 167 provides a ligand contact to (2E)-4-hydroxy-3-methylbut-2-enyl diphosphate. Residue cysteine 197 participates in [4Fe-4S] cluster binding. 4 residues coordinate (2E)-4-hydroxy-3-methylbut-2-enyl diphosphate: serine 225, serine 226, asparagine 227, and serine 269. Residues serine 225, serine 226, asparagine 227, and serine 269 each coordinate dimethylallyl diphosphate. Residues serine 225, serine 226, asparagine 227, and serine 269 each contribute to the isopentenyl diphosphate site.

The protein belongs to the IspH family. [4Fe-4S] cluster serves as cofactor.

It carries out the reaction isopentenyl diphosphate + 2 oxidized [2Fe-2S]-[ferredoxin] + H2O = (2E)-4-hydroxy-3-methylbut-2-enyl diphosphate + 2 reduced [2Fe-2S]-[ferredoxin] + 2 H(+). It catalyses the reaction dimethylallyl diphosphate + 2 oxidized [2Fe-2S]-[ferredoxin] + H2O = (2E)-4-hydroxy-3-methylbut-2-enyl diphosphate + 2 reduced [2Fe-2S]-[ferredoxin] + 2 H(+). It functions in the pathway isoprenoid biosynthesis; dimethylallyl diphosphate biosynthesis; dimethylallyl diphosphate from (2E)-4-hydroxy-3-methylbutenyl diphosphate: step 1/1. Its pathway is isoprenoid biosynthesis; isopentenyl diphosphate biosynthesis via DXP pathway; isopentenyl diphosphate from 1-deoxy-D-xylulose 5-phosphate: step 6/6. In terms of biological role, catalyzes the conversion of 1-hydroxy-2-methyl-2-(E)-butenyl 4-diphosphate (HMBPP) into a mixture of isopentenyl diphosphate (IPP) and dimethylallyl diphosphate (DMAPP). Acts in the terminal step of the DOXP/MEP pathway for isoprenoid precursor biosynthesis. The sequence is that of 4-hydroxy-3-methylbut-2-enyl diphosphate reductase from Histophilus somni (strain 2336) (Haemophilus somnus).